Here is a 237-residue protein sequence, read N- to C-terminus: Platelet-aggregating proteinase PA-BJ (237 aa).

A propeptide spanning residues 1-5 is cleaved from the precursor; the sequence is NSLVI. Positions 6-229 constitute a Peptidase S1 domain; it reads VVGGRPCKIN…YLPWIESIIA (224 aa). 6 cysteine pairs are disulfide-bonded: Cys12/Cys144, Cys31/Cys47, Cys79/Cys236, Cys123/Cys191, Cys155/Cys170, and Cys181/Cys205. Asn25 carries N-linked (GlcNAc...) asparagine glycosylation. The O-linked (GalNAc...) serine glycan is linked to Ser28. Active-site charge relay system residues include His46 and Asp91. The Charge relay system role is filled by Ser185.

Belongs to the peptidase S1 family. Snake venom subfamily. As to quaternary structure, monomer. Expressed by the venom gland.

It is found in the secreted. With respect to regulation, inhibited by PMSF. The amidolytic activity is also inhibited by benzamidine derivatives. In terms of biological role, snake venom serine protease that induces platelet aggregation through activation of protease-activated platelet receptors (PAR1/F2R and PAR4/F2RL3). On F2R, the cleavage occurs at Arg41-Ser42 (like thrombin cleavage), and Arg46-Asn47. In normal condition of hemostasis, the cleavage of the Arg41-Ser42 bond liberates a new N-terminus that functions as an agonist. However after envenomation, the cleavage of Arg46-Asn47 bond degrades this potential agonist. This may explain why the snake protease is less potent than thrombin in causing platelet aggregation and release reaction. On F2RL3, a thrombin-like activity has also been proven by calcium release from lung fibroblasts transfected with this receptor. Possesses amidolytic activities. The protein is Platelet-aggregating proteinase PA-BJ of Bothrops jararaca (Jararaca).